The sequence spans 277 residues: Prohibitin-3, mitochondrial (277 aa).

Glycine 2 is modified (N-acetylglycine). Residues 2-6 are Mitochondrial matrix-facing; it reads GSQQA. A helical; Signal-anchor for type II membrane protein transmembrane segment spans residues 7–28; sequence AVSFLSNLAKAAFGLGTAATVL. Over 29 to 277 the chain is Mitochondrial intermembrane; sequence NTSLFTVDGG…GQSMLFALNR (249 aa).

The protein belongs to the prohibitin family. Component of a prohibitin multimeric complex in mitochondrial membranes. In terms of tissue distribution, mostly expressed in proliferative tissues, including vasculature, shoot and root apical tissues. Expressed in roots, stems, leaves and flowers (at protein level).

Its subcellular location is the cell membrane. It localises to the mitochondrion inner membrane. It is found in the nucleus. The protein localises to the cytoplasm. Prohibitin probably acts as a holdase/unfoldase for the stabilization of newly synthesized mitochondrial proteins. Necessary for mitochondrial and cell metabolism and biogenesis. Required to regulate the ethylene-mediated signaling; involved in growth maintenance in the presence of ethylene. Functions in nitric oxide (NO)-mediated responses and in hydrogen peroxide-induced NO accumulation. The protein is Prohibitin-3, mitochondrial (PHB3) of Arabidopsis thaliana (Mouse-ear cress).